A 619-amino-acid chain; its full sequence is Elongation factor 4 (619 aa).

Residues 17-198 (SVIRNFCIIA…RVVRAIPGPE (182 aa)) enclose the tr-type G domain. GTP is bound by residues 29-34 (DHGKST) and 145-148 (NKID).

It belongs to the TRAFAC class translation factor GTPase superfamily. Classic translation factor GTPase family. LepA subfamily.

It is found in the cell membrane. It carries out the reaction GTP + H2O = GDP + phosphate + H(+). In terms of biological role, required for accurate and efficient protein synthesis under certain stress conditions. May act as a fidelity factor of the translation reaction, by catalyzing a one-codon backward translocation of tRNAs on improperly translocated ribosomes. Back-translocation proceeds from a post-translocation (POST) complex to a pre-translocation (PRE) complex, thus giving elongation factor G a second chance to translocate the tRNAs correctly. Binds to ribosomes in a GTP-dependent manner. The protein is Elongation factor 4 of Micrococcus luteus (strain ATCC 4698 / DSM 20030 / JCM 1464 / CCM 169 / CCUG 5858 / IAM 1056 / NBRC 3333 / NCIMB 9278 / NCTC 2665 / VKM Ac-2230) (Micrococcus lysodeikticus).